A 195-amino-acid polypeptide reads, in one-letter code: Interferon tau-8 (195 aa).

Positions 1–23 (MAFVLSLLMALVLVSYGPGGSLG) are cleaved as a signal peptide. 2 disulfides stabilise this stretch: C24–C122 and C52–C162.

It belongs to the alpha/beta interferon family. IFN-alphaII subfamily. As to expression, constitutively and exclusively expressed in the mononuclear cells of the extraembryonic trophectoderm.

Its subcellular location is the secreted. In terms of biological role, paracrine hormone primarily responsible for maternal recognition of pregnancy. Interacts with endometrial receptors, probably type I interferon receptors, and blocks estrogen receptor expression, preventing the estrogen-induced increase in oxytocin receptor expression in the endometrium. This results in the suppression of the pulsatile endometrial release of the luteolytic hormone prostaglandin F2-alpha, hindering the regression of the corpus luteum (luteolysis) and therefore a return to ovarian cyclicity. This, and a possible direct effect of IFN-tau on prostaglandin synthesis, leads in turn to continued ovarian progesterone secretion, which stimulates the secretion by the endometrium of the nutrients required for the growth of the conceptus. In summary, displays particularly high antiviral and antiproliferative potency concurrently with particular weak cytotoxicity, high antiluteolytic activity and immunomodulatory properties. In contrast with other IFNs, IFN-tau is not virally inducible. The sequence is that of Interferon tau-8 (IFNT8) from Ovis aries (Sheep).